Here is a 149-residue protein sequence, read N- to C-terminus: MRLLVAAFLLLALGDLGPGGAVHFKDCGSAVGVIKELNVNPCPAQPCKLHKGQSYSVNVTFTSNIPSQSSKAVVHGIVLGVAVPFPIPEADGCKSGINCPIQKDKTYSYLNKLPVKNEYPSIKLVVQWMLLGDNNQHLFCWEIPVQIEG.

The signal sequence occupies residues 1-21 (MRLLVAAFLLLALGDLGPGGA). Cystine bridges form between Cys-27–Cys-140, Cys-42–Cys-47, and Cys-93–Cys-99. N-linked (GlcNAc...) asparagine glycosylation is present at Asn-58. Position 116 is an N6-acetyllysine (Lys-116).

This sequence belongs to the NPC2 family. As to quaternary structure, interacts with NPC1 (via the second lumenal domain) in a cholestrol-dependent manner. Interacts with NUS1/NgBR, the interaction stabilizes NCP2 and regulates cholesterol trafficking. Interacts with DHDDS. Interacts with NEDD4L (via C2 domain). Interacts with NPC1L1. As to expression, epididymis. High levels are found in the caput and corpus regions. Weaker levels in the distal cauda and in the efferent ducts.

The protein localises to the secreted. Its subcellular location is the endoplasmic reticulum. The protein resides in the lysosome. The enzyme catalyses cholesterol(in) = cholesterol(out). Intracellular cholesterol transporter which acts in concert with NPC1 and plays an important role in the egress of cholesterol from the lysosomal compartment. Unesterified cholesterol that has been released from LDLs in the lumen of the late endosomes/lysosomes is transferred by NPC2 to the cholesterol-binding pocket in the N-terminal domain of NPC1. May bind and mobilize cholesterol that is associated with membranes. NPC2 binds cholesterol with a 1:1 stoichiometry. Can bind a variety of sterols, including lathosterol, desmosterol and the plant sterols stigmasterol and beta-sitosterol. The secreted form of NCP2 regulates biliary cholesterol secretion via stimulation of ABCG5/ABCG8-mediated cholesterol transport. This chain is NPC intracellular cholesterol transporter 2, found in Canis lupus familiaris (Dog).